The chain runs to 1260 residues: Myosin-1 (1260 aa).

Positions 34–713 constitute a Myosin motor domain; it reads VGVSDLTLLS…TLFALEHMRD (680 aa). Residue 127–134 coordinates ATP; the sequence is GESGAGKT. Residue serine 355 is modified to Phosphoserine. Residues 402–484 are actin-binding; the sequence is SIGILDIYGF…PGIFATLDDS (83 aa). IQ domains are found at residues 717-737 and 738-763; these read YNMAARIQRAWRRFIQRRIDS and AIKIQRAIREKKGGNQYEQLRDYGHR. One can recognise a TH1 domain in the interval 769 to 959; it reads KERRAMSLLG…TISVRQGRPA (191 aa). 2 stretches are compositionally biased toward polar residues: residues 948–963 and 972–988; these read SSTISVRQGRPANSRQ and TLLSDGPSYNSNQSKGY. The segment at 948-1106 is disordered; sequence SSTISVRQGR…PPPPTKQNIP (159 aa). Positions 989-1013 are enriched in low complexity; that stretch reads GQQQHAQPSYGQQQQQQQRYAPQSH. Residues 1030–1064 are compositionally biased toward polar residues; sequence QQNFAASAAQTAYHPQQASHARVPSTNNAHTQHNR. A compositionally biased stretch (low complexity) spans 1065-1082; it reads QPAQQAAQPVQQAAQPAA. Over residues 1092-1101 the composition is skewed to pro residues; it reads APPPPPPPPT. Positions 1103 to 1165 constitute an SH3 domain; it reads QNIPKFQAAY…PTNYIVEYKE (63 aa).

The protein belongs to the TRAFAC class myosin-kinesin ATPase superfamily. Myosin family. In terms of processing, phosphorylation of the TEDS site (Ser-355) is required for the polarization of the actin cytoskeleton. Phosphorylation probably activates the myosin-I ATPase activity.

It localises to the cytoplasm. The protein localises to the cytoskeleton. Its subcellular location is the actin patch. In terms of biological role, type-I myosin implicated in the organization of the actin cytoskeleton. Required for proper actin cytoskeleton polarization. At the cell cortex, assembles in patch-like structures together with proteins from the actin-polymerizing machinery and promotes actin assembly. Functions as actin nucleation-promoting factor (NPF) for the Arp2/3 complex. This Kluyveromyces lactis (strain ATCC 8585 / CBS 2359 / DSM 70799 / NBRC 1267 / NRRL Y-1140 / WM37) (Yeast) protein is Myosin-1 (MYO1).